Reading from the N-terminus, the 160-residue chain is Cytochrome b6-f complex subunit 4 (160 aa).

3 consecutive transmembrane segments (helical) span residues 36–56, 95–115, and 131–151; these read LLYI…GLAV, LLGI…PFIE, and AVFL…TLPI.

The protein belongs to the cytochrome b family. PetD subfamily. As to quaternary structure, the 4 large subunits of the cytochrome b6-f complex are cytochrome b6, subunit IV (17 kDa polypeptide, PetD), cytochrome f and the Rieske protein, while the 4 small subunits are PetG, PetL, PetM and PetN. The complex functions as a dimer.

Its subcellular location is the cellular thylakoid membrane. Functionally, component of the cytochrome b6-f complex, which mediates electron transfer between photosystem II (PSII) and photosystem I (PSI), cyclic electron flow around PSI, and state transitions. The protein is Cytochrome b6-f complex subunit 4 of Trichodesmium erythraeum (strain IMS101).